The following is a 339-amino-acid chain: Phosphate acyltransferase (339 aa).

It belongs to the PlsX family. As to quaternary structure, homodimer. Probably interacts with PlsY.

Its subcellular location is the cytoplasm. It catalyses the reaction a fatty acyl-[ACP] + phosphate = an acyl phosphate + holo-[ACP]. It participates in lipid metabolism; phospholipid metabolism. Catalyzes the reversible formation of acyl-phosphate (acyl-PO(4)) from acyl-[acyl-carrier-protein] (acyl-ACP). This enzyme utilizes acyl-ACP as fatty acyl donor, but not acyl-CoA. This is Phosphate acyltransferase from Helicobacter pylori (strain J99 / ATCC 700824) (Campylobacter pylori J99).